A 365-amino-acid polypeptide reads, in one-letter code: Oligosaccharides import ATP-binding protein MsmX (365 aa).

The region spanning 4-235 (LRMEHIYKFY…PENVFVGGFI (232 aa)) is the ABC transporter domain. 37-44 (GPSGCGKS) contacts ATP.

It belongs to the ABC transporter superfamily. The complex involved in maltodextrin import is composed of two ATP-binding proteins (MsmX), two transmembrane proteins (MdxF and MdxG) and a solute-binding protein (MdxE). The complex involved in arabinooligosaccharides uptake is composed of two ATP-binding proteins (MsmX), two transmembrane proteins (AraP and AraQ) and a solute-binding protein (AraN). The complex involved in galactooligosaccharides uptake is composed of two ATP-binding proteins (MsmX), two transmembrane proteins (GanP and GanQ) and a solute-binding protein (GanS). The complex involved in melibiose, raffinose and stachyose import is composed of two ATP-binding proteins (MsmX), two transmembrane proteins (MelC and MelD) and a solute-binding protein (MelE). The complex involved in polygalacturonan and rhamnogalacturonan type I uptake is probably composed of two ATP-binding proteins (MsmX), two transmembrane proteins (YtcP and YteP) and a solute-binding protein (YtcQ).

It localises to the cell membrane. Functionally, required to energize different ABC-type saccharide transporters. Part of the MdxEFG-MsmX ABC transporter complex involved in maltodextrin import, of the AraNPQ-MsmX complex involved in arabinooligosaccharides import, of the GanPQS-MsmX complex involved in galactooligosaccharides import, and of the MelEDC-MsmX complex involved in melibiose, raffinose and stachyose import. Is probably also part of the ABC transporter complex YtcQP-YteP-MsmX involved in polygalacturonan and rhamnogalacturonan type I import during pectin degradation. Responsible for energy coupling to the transport system. This Bacillus subtilis (strain 168) protein is Oligosaccharides import ATP-binding protein MsmX (msmX).